The sequence spans 1247 residues: ABC transporter B family member 14 (1247 aa).

The region spanning 48–337 is the ABC transmembrane type-1 1 domain; that stretch reads MFLGGLGTCI…AVPSLSAISK (290 aa). Transmembrane regions (helical) follow at residues 49 to 69, 95 to 115, 172 to 192, 196 to 216, 277 to 297, and 315 to 335; these read FLGG…FVFF, LYLV…VACW, HVLR…LSVW, LLTL…AIVM, LGVG…FWYA, and ILNV…LSAI. 2 N-linked (GlcNAc...) asparagine glycosylation sites follow: Asn-362 and Asn-392. Residues 373–608 form the ABC transporter 1 domain; sequence IEFCGVSFAY…GGDYATLVNC (236 aa). 407 to 414 provides a ligand contact to ATP; sequence GPSGSGKS. An ABC transmembrane type-1 2 domain is found at 679–971; that stretch reads EWLYALLGSI…TLALTPDIVK (293 aa). 2 helical membrane passes run 680–700 and 727–747; these read WLYA…PALF and AIIF…QHYF. Residue Asn-780 is glycosylated (N-linked (GlcNAc...) asparagine). 3 helical membrane-spanning segments follow: residues 807 to 824, 830 to 850, and 915 to 935; these read IVQN…AFFY, AVVT…QLFL, and LSQC…SVLI. Asn-938 carries an N-linked (GlcNAc...) asparagine glycan. The helical transmembrane segment at 949-969 threads the bilayer; it reads FMVLLVTAYSVAETLALTPDI. The region spanning 1006 to 1242 is the ABC transporter 2 domain; it reads IEFRNVSFAY…SDGFYKKLTS (237 aa). Asn-1010 is a glycosylation site (N-linked (GlcNAc...) asparagine). 1041–1048 is an ATP binding site; the sequence is GPSGSGKS. Asn-1108 is a glycosylation site (N-linked (GlcNAc...) asparagine).

It belongs to the ABC transporter superfamily. ABCB family. Multidrug resistance exporter (TC 3.A.1.201) subfamily.

It localises to the membrane. The protein is ABC transporter B family member 14 (ABCB14) of Arabidopsis thaliana (Mouse-ear cress).